The sequence spans 422 residues: Tryptophan synthase beta chain 2 (422 aa).

At K111 the chain carries N6-(pyridoxal phosphate)lysine.

It belongs to the TrpB family. As to quaternary structure, tetramer of two alpha and two beta chains. Requires pyridoxal 5'-phosphate as cofactor.

It carries out the reaction (1S,2R)-1-C-(indol-3-yl)glycerol 3-phosphate + L-serine = D-glyceraldehyde 3-phosphate + L-tryptophan + H2O. The protein operates within amino-acid biosynthesis; L-tryptophan biosynthesis; L-tryptophan from chorismate: step 5/5. Its function is as follows. The beta subunit is responsible for the synthesis of L-tryptophan from indole and L-serine. The polypeptide is Tryptophan synthase beta chain 2 (trpB2) (Thermotoga maritima (strain ATCC 43589 / DSM 3109 / JCM 10099 / NBRC 100826 / MSB8)).